Here is a 41-residue protein sequence, read N- to C-terminus: Photosystem II reaction center protein Y (41 aa).

A helical membrane pass occupies residues 7–25; it reads IAIVLAPVVIAASWAVFNI.

This sequence belongs to the PsbY family. In terms of assembly, PSII is composed of 1 copy each of membrane proteins PsbA, PsbB, PsbC, PsbD, PsbE, PsbF, PsbH, PsbI, PsbJ, PsbK, PsbL, PsbM, PsbT, PsbX, PsbY, PsbZ, Psb30/Ycf12, peripheral proteins PsbO, CyanoQ (PsbQ), PsbU, PsbV and a large number of cofactors. It forms dimeric complexes.

Its subcellular location is the cellular thylakoid membrane. Its function is as follows. Loosely associated component of the core of photosystem II (PSII), it is not always seen in crystals. PSII is a light-driven water plastoquinone oxidoreductase, using light energy to abstract electrons from H(2)O, generating a proton gradient subsequently used for ATP formation. The sequence is that of Photosystem II reaction center protein Y from Nostoc punctiforme (strain ATCC 29133 / PCC 73102).